The primary structure comprises 55 residues: Conotoxin Cal14.14 (55 aa).

An N-terminal signal peptide occupies residues 1 to 20; the sequence is MFRLGVFLLTFLLLVSMATS. 2 disulfide bridges follow: C34–C48 and C38–C52.

Expressed by the venom duct.

It is found in the secreted. In terms of biological role, probable neurotoxin. The chain is Conotoxin Cal14.14 from Californiconus californicus (California cone).